We begin with the raw amino-acid sequence, 477 residues long: MTQFESSRATVHIVGAGLAGSEAAWQVAAQGVRVVLHEMRPHRMTAAHRTGGLAELVCSNSFRSDDASNNAVGLLHAEMRRLGSLVMRCADANQVPAGGALAVDRDGFSAAVTEALDNHPLIEIDRAEIDGLPPADWGNVIVATGPLTSTPLAAAIRALTDESALAFFDAIAPIVHRDSIDMSKAWFQSRYDKAGPGGSGADYINCPLSEAQYHAFVDALLEGEKVDFKDWETAPPYFDGCLPIEVMAERGRETLRYGPMKPVGLTNPHDPATKPYAVVQLRQDNKLGTLYNIVGFQTKLKHGAQTRIFRTIPGLEGAEFARLGGLHRNTFLNSPKLLDVRLRLRAEPRLRFAGQMTGCEGYVESAAIGLLGGLYAAADARSCTLEAPPQTTALGALLGHITGGHIETIDTGPRSFQPMNINFGLFPPLADPPTRKPDGTRLRGNEKTIAKKQAICARALSDLDRWIADALRPAAAA.

15–20 (GAGLAG) is an FAD binding site.

It belongs to the MnmG family. TrmFO subfamily. Requires FAD as cofactor.

It localises to the cytoplasm. The enzyme catalyses uridine(54) in tRNA + (6R)-5,10-methylene-5,6,7,8-tetrahydrofolate + NADH + H(+) = 5-methyluridine(54) in tRNA + (6S)-5,6,7,8-tetrahydrofolate + NAD(+). It carries out the reaction uridine(54) in tRNA + (6R)-5,10-methylene-5,6,7,8-tetrahydrofolate + NADPH + H(+) = 5-methyluridine(54) in tRNA + (6S)-5,6,7,8-tetrahydrofolate + NADP(+). In terms of biological role, catalyzes the folate-dependent formation of 5-methyl-uridine at position 54 (M-5-U54) in all tRNAs. The chain is Methylenetetrahydrofolate--tRNA-(uracil-5-)-methyltransferase TrmFO from Nitrobacter winogradskyi (strain ATCC 25391 / DSM 10237 / CIP 104748 / NCIMB 11846 / Nb-255).